A 564-amino-acid polypeptide reads, in one-letter code: Mercuric reductase (564 aa).

An HMA domain is found at 1–65 (MSTLKITGMT…AVAGLGYRAT (65 aa)). A metal cation is bound by residues Cys-11 and Cys-14. Residues Ala-109, Gly-129, and Thr-134 each coordinate FAD. Cys-135 and Cys-140 form a disulfide bridge. Residues Lys-144, Ala-210, Asp-406, and Val-414 each coordinate FAD. Residues Cys-561 and Cys-562 each coordinate Hg(2+).

It belongs to the class-I pyridine nucleotide-disulfide oxidoreductase family. Homodimer. FAD serves as cofactor.

It catalyses the reaction Hg + NADP(+) + H(+) = Hg(2+) + NADPH. Functionally, resistance to Hg(2+) in bacteria appears to be governed by a specialized system which includes mercuric reductase. MerA protein is responsible for volatilizing mercury as Hg(0). The sequence is that of Mercuric reductase (merA) from Shigella flexneri.